A 100-amino-acid chain; its full sequence is Toxin Rv0299 (100 aa).

Functionally, toxic component of a type II toxin-antitoxin (TA) system. Upon expression in M.smegmatis inhibits colony formation. Its toxic effect is neutralized by coexpression with cognate antitoxin Rv0298/MT0312. The sequence is that of Toxin Rv0299 from Mycobacterium tuberculosis (strain ATCC 25618 / H37Rv).